The chain runs to 88 residues: Apolipoprotein C-I (88 aa).

Positions 1–26 (MRLLISLPVLIVVLAMALEGPAPAQA) are cleaved as a signal peptide.

Belongs to the apolipoprotein C1 family.

The protein localises to the secreted. In terms of biological role, inhibitor of lipoprotein binding to the low density lipoprotein (LDL) receptor, LDL receptor-related protein, and very low density lipoprotein (VLDL) receptor. Associates with high density lipoproteins (HDL) and the triacylglycerol-rich lipoproteins in the plasma and makes up about 10% of the protein of the VLDL and 2% of that of HDL. Appears to interfere directly with fatty acid uptake and is also the major plasma inhibitor of cholesteryl ester transfer protein (CETP). Modulates the interaction of APOE with beta-migrating VLDL and inhibits binding of beta-VLDL to the LDL receptor-related protein. Binds free fatty acids and reduces their intracellular esterification. This chain is Apolipoprotein C-I (APOC1), found in Mesocricetus auratus (Golden hamster).